The chain runs to 142 residues: MKTFTAKPETVKRDWYVVDATGKTLGRLATELARRLRGKHKAEYTPHVDTGDYIIVLNADKVAVTGNKRTDKVYYHHTGHIGGIKQVSFEEMIARRPERVIEIAVKGMLPKGPLGRAMFRKLKVYAGNEHNHAAQQPQVLDI.

Belongs to the universal ribosomal protein uL13 family. In terms of assembly, part of the 50S ribosomal subunit.

In terms of biological role, this protein is one of the early assembly proteins of the 50S ribosomal subunit, although it is not seen to bind rRNA by itself. It is important during the early stages of 50S assembly. The sequence is that of Large ribosomal subunit protein uL13 from Shigella sonnei (strain Ss046).